The sequence spans 159 residues: UPF0225 protein plu2503 (159 aa).

Belongs to the UPF0225 family.

This chain is UPF0225 protein plu2503, found in Photorhabdus laumondii subsp. laumondii (strain DSM 15139 / CIP 105565 / TT01) (Photorhabdus luminescens subsp. laumondii).